Consider the following 494-residue polypeptide: Truncated non-functional calcium-binding mitochondrial carrier SAL1-1 (494 aa).

The EF-hand 1 domain maps to 11-46; the sequence is QRDIRYACLFKELDVKGNGQVTLDNLISAFEKNDHP. K65, D70, D93, D95, D97, K99, and E104 together coordinate Ca(2+). EF-hand domains lie at 80–115, 120–155, and 156–191; these read NAESQIWNGFQRIDLDHDGKIGINEINRYLSDLDNQ, NELNHELSNEKVNKFSRFFEWAFPKRKANIALRGQA, and SHKKNTDNDRSKKTTDSDLYVTYDQWRDFLLLVPRK. Ca(2+) is bound by residues T161 and S166. Solcar repeat units lie at residues 225–332 and 345–434; these read IRGF…TKKI and LSKF…LKKM. 5 helical membrane passes run 231–248, 307–326, 355–368, 409–428, and 458–475; these read FIAGGISGVISRTCTAPF, GNGLNVIKVFPESSIKFGSF, GLAGMAAQFSVYPI, RCHSRYSGHISLCCIRFGDF, and TSNGCIQWNCRSFCCLSN. The Solcar 3; truncated repeat unit spans residues 452 to 494; it reads SKQPGCTSNGCIQWNCRSFCCLSNQSFKNKTTSPRNICTSLCV.

The protein belongs to the mitochondrial carrier (TC 2.A.29) family.

It localises to the mitochondrion inner membrane. In terms of biological role, calcium-dependent mitochondrial solute carrier. This chain is Truncated non-functional calcium-binding mitochondrial carrier SAL1-1 (SAL1), found in Saccharomyces cerevisiae (strain ATCC 204508 / S288c) (Baker's yeast).